The chain runs to 36 residues: Alpha-amylase inhibitor AI-3688 (36 aa).

C9 and C25 form a disulfide bridge.

In terms of biological role, inhibits mammalian alpha-amylases specifically but has no action on plant and microbial alpha-amylases. This is Alpha-amylase inhibitor AI-3688 from Kitasatospora aureofaciens (Streptomyces aureofaciens).